A 548-amino-acid chain; its full sequence is Synaptic vesicle 2-related protein (548 aa).

At 1-87 (MEEDLFQLRQ…GFGRFQWKLS (87 aa)) the chain is on the cytoplasmic side. A phosphoserine mark is found at serine 25 and serine 31. Residues 88–108 (VLTGLAWMADAMEMMILSILA) form a helical membrane-spanning segment. Residues 109 to 122 (PQLHCEWRLPSWQV) are Vesicular-facing. Residues 123–143 (ALLTSVVFIGMMSSSTLWGNI) traverse the membrane as a helical segment. Topologically, residues 144–156 (SDQYGRKTGLKIS) are cytoplasmic. The helical transmembrane segment at 157–177 (VFWTLYYGILSAFAPVYSWIL) threads the bilayer. Topologically, residues 178 to 180 (VLR) are vesicular. Residues 181-201 (GLVGFGIGGVPQSVTLYAEFL) traverse the membrane as a helical segment. The Cytoplasmic portion of the chain corresponds to 202–209 (PMKARAKC). The chain crosses the membrane as a helical span at residues 210 to 230 (ILLIEVFWAIGTVFEVLLAVF). Topologically, residues 231 to 238 (VMPSLGWR) are vesicular. A helical transmembrane segment spans residues 239-259 (WLLLLSAAPLLVFAVLCFWLP). The Cytoplasmic portion of the chain corresponds to 260 to 316 (ESARYDVLSGNQEKAIATLKRIATENGAPMPLGKLIISRQEDRGKMRDLFTPHFRWT). Residues 317–337 (TLLLWFIWFSNAFSYYGLVLL) traverse the membrane as a helical segment. At 338–373 (TTELFQAGDVCSISSRKKAVEAKCSLACEYLSKEDY) the chain is on the vesicular side. The chain crosses the membrane as a helical span at residues 374-394 (MDLLWTTLSEFPGVLVTLWVI). At 395–401 (DRLGRKK) the chain is on the cytoplasmic side. The helical transmembrane segment at 402-422 (TMALCFVIFSLCSLLLFICIG) threads the bilayer. The Vesicular portion of the chain corresponds to 423–424 (RN). The helical transmembrane segment at 425-445 (VLTLLLFIARAFISGGFQAAY) threads the bilayer. At 446-457 (VYTPEVYPTATR) the chain is on the cytoplasmic side. The chain crosses the membrane as a helical span at residues 458 to 478 (ALGLGTCSGMARVGALITPFI). Residues 479–489 (AQVMLESSVYL) lie on the Vesicular side of the membrane. Residues 490 to 510 (TLAVYSGCCLLAALASCFLPI) traverse the membrane as a helical segment. At 511–548 (ETKGRALQESSHREWGQEMVGRGTNSTGVPRSNSGSQE) the chain is on the cytoplasmic side. Residues 523 to 548 (REWGQEMVGRGTNSTGVPRSNSGSQE) form a disordered region. Polar residues predominate over residues 533 to 548 (GTNSTGVPRSNSGSQE). Position 542 is a phosphoserine (serine 542).

It belongs to the major facilitator superfamily. Detected in brain (at protein level). Detected in brain, in synaptic layers of the cerebellum, hippocampus and cerebral cortex.

The protein resides in the cytoplasmic vesicle. It is found in the secretory vesicle. Its subcellular location is the synaptic vesicle membrane. In Rattus norvegicus (Rat), this protein is Synaptic vesicle 2-related protein (Svop).